Here is a 218-residue protein sequence, read N- to C-terminus: Cytidylate kinase (218 aa).

10–18 (GPAAAGKST) provides a ligand contact to ATP.

Belongs to the cytidylate kinase family. Type 1 subfamily.

It localises to the cytoplasm. It carries out the reaction CMP + ATP = CDP + ADP. It catalyses the reaction dCMP + ATP = dCDP + ADP. The protein is Cytidylate kinase of Staphylococcus haemolyticus (strain JCSC1435).